The following is a 493-amino-acid chain: Dihydro-heme d1 dehydrogenase (493 aa).

Positions 1–18 (MRLIGLALGLLLGALAQA) are cleaved as a signal peptide. The region spanning 19–96 (GEAPGEALYR…ALVAYLYQAP (78 aa)) is the Cytochrome c domain. Residues Cys31, Cys34, His35, Arg68, and Met73 each coordinate heme c. The tract at residues 114–468 (PHPLATLPSR…YDAHSLEEVK (355 aa)) is D1-heme domain. The heme d1 site is built by His165, Gly167, Lys169, Arg182, Arg207, Asn208, His341, Arg390, and His435. Arg182 provides a ligand contact to heme c.

It belongs to the cytochrome c family. In terms of assembly, monomer. Heme c serves as cofactor.

It localises to the periplasm. The enzyme catalyses dihydro-heme d1 + A = heme d1 + AH2. It functions in the pathway porphyrin-containing compound metabolism. In terms of biological role, involved in heme d1 biosynthesis. Catalyzes the introduction of a double bond into the propionate side chain of pyrrole ring D of dihydro-heme d1, therefore converting dihydro-heme d1 to heme d1. This Pseudomonas aeruginosa (strain ATCC 15692 / DSM 22644 / CIP 104116 / JCM 14847 / LMG 12228 / 1C / PRS 101 / PAO1) protein is Dihydro-heme d1 dehydrogenase.